We begin with the raw amino-acid sequence, 343 residues long: NAD-dependent deacetylase sir2E (343 aa).

In terms of domain architecture, Deacetylase sirtuin-type spans 27–300 (YLKNKKEFEF…PLLERQLLYE (274 aa)). H152 functions as the Proton acceptor in the catalytic mechanism. Residues C160, C165, C200, and C203 each contribute to the Zn(2+) site.

It belongs to the sirtuin family.

It localises to the nucleus. It catalyses the reaction N(6)-acetyl-L-lysyl-[protein] + NAD(+) + H2O = 2''-O-acetyl-ADP-D-ribose + nicotinamide + L-lysyl-[protein]. Its function is as follows. NAD-dependent deacetylase, which plays an important role in the regulation of transcriptional repression. May play a role in cell cycle. When overexpressed, the cell cycle is accelerated. In Dictyostelium discoideum (Social amoeba), this protein is NAD-dependent deacetylase sir2E (sir2E).